Reading from the N-terminus, the 735-residue chain is Disintegrin and metalloproteinase domain-containing protein 2 (735 aa).

The N-terminal stretch at 1-18 is a signal peptide; sequence MWLILLLLSGLSELGGLS. The propeptide occupies 19–180; it reads QSQTEGTREK…YKIRSIKPQR (162 aa). Residues 19–686 are Extracellular-facing; the sequence is QSQTEGTREK…ASAYRSKSPR (668 aa). Residues Asn128, Asn226, and Asn279 are each glycosylated (N-linked (GlcNAc...) asparagine). A Peptidase M12B domain is found at 184 to 381; the sequence is HYLEIHIVVE…QSSHCLQNQP (198 aa). Disulfide bonds link Cys293/Cys376, Cys335/Cys360, Cys337/Cys342, and Cys449/Cys469. Asn359, Asn463, Asn489, Asn569, and Asn585 each carry an N-linked (GlcNAc...) asparagine glycan. The region spanning 389–476 is the Disintegrin domain; the sequence is MAVCGNGEVE…EVCEDFFVQN (88 aa). Residues 615-648 enclose the EGF-like domain; that stretch reads LGYDCNLEKCNHHGVCNNKKNCHCDPTYLPPDCK. 3 disulfides stabilise this stretch: Cys619–Cys630, Cys624–Cys636, and Cys638–Cys647. The chain crosses the membrane as a helical span at residues 687 to 707; that stretch reads WPFFLIIPFYVVILVLIGMLV. Topologically, residues 708–735 are cytoplasmic; sequence KVYSQRMKWRMDDFSSEEQFESESESKD. Ser729 bears the Phosphoserine mark.

As to quaternary structure, heterodimer with ADAM1/fertilin subunit alpha. In terms of processing, the signal and the metalloprotease domain are cleaved during the epididymal maturation of the spermatozoa. In terms of tissue distribution, expressed in the testis and testicular sperm (at protein level).

The protein resides in the membrane. Functionally, sperm surface membrane protein that may be involved in sperm-egg plasma membrane adhesion and fusion during fertilization. Could have a direct role in sperm-zona binding or migration of sperm from the uterus into the oviduct. Interactions with egg membrane could be mediated via binding between its disintegrin-like domain to one or more integrins receptors on the egg. This is a non catalytic metalloprotease-like protein. The chain is Disintegrin and metalloproteinase domain-containing protein 2 from Mus musculus (Mouse).